The primary structure comprises 1030 residues: Protein phosphatase 1 regulatory subunit 12A (1030 aa).

A KVKF motif motif is present at residues 35–38 (KVKF). 6 ANK repeats span residues 39–68 (DDGA…DINY), 72–101 (DGLT…NINQ), 105–134 (EGWI…HVGA), 138–164 (EGDT…RQGV), 198–227 (SGGT…DVNI), and 231–260 (DGWT…DMEM). Asparagine 67 and asparagine 100 each carry (3S)-3-hydroxyasparagine; by HIF1AN; partial. The residue at position 226 (asparagine 226) is a (3S)-3-hydroxyasparagine; by HIF1AN; partial. Disordered stretches follow at residues 290–628 (LHSE…SVPT) and 643–928 (ASTT…EKDD). A compositionally biased stretch (basic and acidic residues) spans 291-300 (HSEKRDKKSP). Residue serine 299 is modified to Phosphoserine. Polar residues predominate over residues 302-316 (IESTANMDNNQSQKT). The span at 318–340 (KNKETLIIEPEKNASRIESLEQE) shows a compositional bias: basic and acidic residues. Over residues 357-369 (SEEDEEDDSESEA) the composition is skewed to acidic residues. Residues 385-402 (TSSTQAAPVAVTTPTVSS) show a composition bias toward low complexity. Phosphoserine occurs at positions 422 and 432. Residues 422–432 (SPKEEERKDES) show a composition bias toward basic and acidic residues. Threonine 443 carries the phosphothreonine modification. Serine 445 bears the Phosphoserine; by NUAK1 mark. Tyrosine 446 carries the phosphotyrosine modification. The segment covering 469 to 480 (RSASSPRLSSSL) has biased composition (low complexity). At serine 472 the chain carries Phosphoserine; by NUAK1. Serine 473 bears the Phosphoserine; by CDK1 mark. Serine 477 carries the post-translational modification Phosphoserine. Basic and acidic residues predominate over residues 481-491 (DNKEKEKDSKG). Phosphoserine occurs at positions 507 and 509. Residues 540-551 (NSSVNEGSTYHK) are compositionally biased toward polar residues. The segment covering 564 to 610 (SSSVPSTTSTPTVTSAAGLQKSLLSSTSTTTKITTGSSSAGTQSSTS) has biased composition (low complexity). A phosphoserine mark is found at serine 601 and serine 618. Basic and acidic residues predominate over residues 614-625 (WAEDSTEKEKDS). Low complexity predominate over residues 643–660 (ASTTTLTTTTAGTVSSTT). The segment covering 673 to 682 (VRDEESESQR) has biased composition (basic and acidic residues). The tract at residues 682 to 864 (RKARSRQARQ…VSFWTQDSDE (183 aa)) is interaction with ROCK2. A compositionally biased stretch (basic residues) spans 683-693 (KARSRQARQSR). Residues serine 692 and serine 695 each carry the phosphoserine; by PKA and PKG; in vitro modification. Threonine 696 carries the phosphothreonine; by ROCK1, ROCK2, CDC42BP, ZIPK/DAPK3 and RAF1 modification. A compositionally biased stretch (basic and acidic residues) spans 718–767 (RTREQENEEKEKEEKEKQDKEKQEEKKESETSREDEYKQKYSRTYDETYQ). Over residues 773–795 (STSSSTTPSSSLSTMSSSLYASS) the composition is skewed to low complexity. Polar residues predominate over residues 796-810 (QLNRPNSLVGITSAY). Serine 802 carries the post-translational modification Phosphoserine. Residues 814–840 (ITKENEREGEKREEEKEGEDKSQPKSI) show a composition bias toward basic and acidic residues. Positions 841-852 (RERRRPREKRRS) are enriched in basic residues. Serine 852 bears the Phosphoserine; by ROCK2 mark. Positions 861–875 (DSDENEQEQQSDTEE) are enriched in acidic residues. Phosphoserine occurs at positions 862 and 871. The span at 884–897 (TDSISRYETSSTSA) shows a compositional bias: polar residues. Phosphoserine occurs at positions 903 and 908. Residues 903–913 (SLLGRSGSYSY) are compositionally biased toward low complexity. At serine 910 the chain carries Phosphoserine; by NUAK1. Residues 914–928 (LEERKPYSSRLEKDD) show a composition bias toward basic and acidic residues. A Phosphoserine modification is found at serine 995.

As to quaternary structure, PP1 comprises a catalytic subunit, PPP1CA, PPP1CB or PPP1CC, and one or several targeting or regulatory subunits. PPP1R12A mediates binding to myosin. Interacts with ARHA and CIT. Binds PPP1R12B, ROCK1 and IL16. Interacts directly with PRKG1. Non-covalent dimer of 2 dimers; PRKG1-PRKG1 and PPP1R12A-PPP1R12A. Interacts with SMTNL1. Interacts with PPP1CB; the interaction is direct. Interacts (when phosphorylated at Ser-445, Ser-472 and Ser-910) with 14-3-3. Interacts with ROCK1 and ROCK2. Interacts with isoform 1 and isoform 2 of ZIPK/DAPK3. Interacts with RAF1. Interacts with HIF1AN. Interacts with NCKAP1L. Post-translationally, phosphorylated by CIT (Rho-associated kinase). Phosphorylated cooperatively by ROCK1 and CDC42BP on Thr-696. Phosphorylated on upon DNA damage, probably by ATM or ATR. In vitro, phosphorylation of Ser-695 by PKA and PKG appears to prevent phosphorylation of the inhibitory site Thr-696, probably mediated by PRKG1. Phosphorylation at Ser-445, Ser-472 and Ser-910 by NUAK1 promotes interaction with 14-3-3, leading to inhibit interaction with myosin light chain MLC2, preventing dephosphorylation of MLC2. May be phosphorylated at Thr-696 by DMPK; may inhibit the myosin phosphatase activity. Phosphorylated at Ser-473 by CDK1 during mitosis, creating docking sites for the POLO box domains of PLK1. Subsequently, PLK1 binds and phosphorylates PPP1R12A. Expressed in striated muscles, specifically in type 2a fibers (at protein level).

It localises to the cytoplasm. The protein resides in the cytoskeleton. Its subcellular location is the stress fiber. Its function is as follows. Key regulator of protein phosphatase 1C (PPP1C). Mediates binding to myosin. As part of the PPP1C complex, involved in dephosphorylation of PLK1. Capable of inhibiting HIF1AN-dependent suppression of HIF1A activity. The chain is Protein phosphatase 1 regulatory subunit 12A from Homo sapiens (Human).